The following is a 215-amino-acid chain: Ribose-5-phosphate isomerase A (215 aa).

Residues 26 to 29, 79 to 82, and 92 to 95 contribute to the substrate site; these read TGST, DGAD, and KGGG. The active-site Proton acceptor is glutamate 101. Lysine 119 is a binding site for substrate.

It belongs to the ribose 5-phosphate isomerase family. In terms of assembly, homodimer.

It carries out the reaction aldehydo-D-ribose 5-phosphate = D-ribulose 5-phosphate. It functions in the pathway carbohydrate degradation; pentose phosphate pathway; D-ribose 5-phosphate from D-ribulose 5-phosphate (non-oxidative stage): step 1/1. Catalyzes the reversible conversion of ribose-5-phosphate to ribulose 5-phosphate. This Xanthomonas oryzae pv. oryzae (strain MAFF 311018) protein is Ribose-5-phosphate isomerase A.